The primary structure comprises 155 residues: Ribosome maturation factor RimP (155 aa).

The protein belongs to the RimP family.

Its subcellular location is the cytoplasm. Functionally, required for maturation of 30S ribosomal subunits. This chain is Ribosome maturation factor RimP, found in Listeria monocytogenes serotype 4a (strain HCC23).